Consider the following 262-residue polypeptide: MANKKIRVTGAEAEQPSILKRISGALTLNPLDYHLDYSKLISLNFMVKISFHDASDYDLFVREGITPVELFEALASNWSTDSGEVHYVDGNTHDKDEIDTSVKLCELITIIKDLPFHKSEESTHFSILSTSLTLGFGDQILQKHDNSVIPIITERSLPQYMHAIIQYEYPRVSGGIAATICAGICIRSPPIGNCPPIMKPLHLELLCYHYGLKMSGDAPSPAEGKIGRIKRPTERKEDTPSMTKRLKGGVGATISRMLSWKE.

The disordered stretch occupies residues 219–243 (PSPAEGKIGRIKRPTERKEDTPSMT).

It belongs to the nucleorhabdovirus type-1 matrix protein family. As to quaternary structure, homomultimer. Interacts with nucleoprotein and with the cytoplasmic domain of glycoprotein.

The protein resides in the virion membrane. The protein localises to the host endomembrane system. Plays a major role in assembly and budding of virion. Completely covers the ribonucleoprotein coil and keep it in condensed bullet-shaped form. Inhibits viral transcription and stimulates replication. This chain is Matrix protein (M), found in Rice yellow stunt virus (RYSV).